Here is a 1288-residue protein sequence, read N- to C-terminus: 5-oxoprolinase (1288 aa).

A disordered region spans residues 1248-1270; sequence PGGGGYGDPEDPAPPPGSPPLFP. Positions 1259-1270 are enriched in pro residues; that stretch reads PAPPPGSPPLFP. A Phosphoserine modification is found at S1265.

The protein belongs to the oxoprolinase family. In terms of assembly, homodimer. In terms of tissue distribution, expressed in testis, kidney and liver.

It localises to the cytoplasm. The protein resides in the cytosol. It carries out the reaction 5-oxo-L-proline + ATP + 2 H2O = L-glutamate + ADP + phosphate + H(+). Catalyzes the cleavage of 5-oxo-L-proline to form L-glutamate coupled to the hydrolysis of ATP to ADP and inorganic phosphate. This Rattus norvegicus (Rat) protein is 5-oxoprolinase (Oplah).